The following is a 597-amino-acid chain: Membrane protein insertase YidC (597 aa).

Residues 8 to 28 (YFVAIALSVLILIAWQFFYVS) form a helical membrane-spanning segment. The disordered stretch occupies residues 38-75 (AEKAQQAQSQPGTQQAAPGQAAPGQALPGGAIPSAAES). A compositionally biased stretch (low complexity) spans 41-70 (AQQAQSQPGTQQAAPGQAAPGQALPGGAIP). Helical transmembrane passes span 372 to 392 (LFGN…LIFF), 446 to 466 (WPIL…YVTI), 491 to 511 (LFGL…WPIV), and 535 to 555 (FTWM…GLVI).

The protein belongs to the OXA1/ALB3/YidC family. Type 1 subfamily. Interacts with the Sec translocase complex via SecD. Specifically interacts with transmembrane segments of nascent integral membrane proteins during membrane integration.

The protein localises to the cell inner membrane. Required for the insertion and/or proper folding and/or complex formation of integral membrane proteins into the membrane. Involved in integration of membrane proteins that insert both dependently and independently of the Sec translocase complex, as well as at least some lipoproteins. Aids folding of multispanning membrane proteins. This Sinorhizobium medicae (strain WSM419) (Ensifer medicae) protein is Membrane protein insertase YidC.